The primary structure comprises 512 residues: Maturase K (512 aa).

The protein belongs to the intron maturase 2 family. MatK subfamily.

The protein localises to the plastid. It is found in the chloroplast. In terms of biological role, usually encoded in the trnK tRNA gene intron. Probably assists in splicing its own and other chloroplast group II introns. The protein is Maturase K of Oenothera parviflora (Small-flowered evening primrose).